Here is a 61-residue protein sequence, read N- to C-terminus: SPbeta prophage-derived uncharacterized protein YotK (61 aa).

Positions 7-57 (SIQTLLNKMDRQMKTVKEAIEEKDLQRAHRNLINLADNNEELMQEIRWVKK) form a coiled coil.

This chain is SPbeta prophage-derived uncharacterized protein YotK (yotK), found in Bacillus subtilis (strain 168).